The primary structure comprises 1221 residues: MIDVNKFESMQIGLASPNKIRSWSYGEVKKPETINYRTLKPEKDGLFDERIFGPTKDYACACGKYKGVRYKGIVCDRCGVEVTTSHVRRERMGHIELAAPVTHIWYFKGIPSRMGLVLDVSPKQLEEVIYFAAYIVIDPGDTGLEAKQLLTEAEYREEKAKYGNRFVAKMGAEAIRDLLKQVDLDKEVTALKAELQTLKGQKRTRAIRRLDILDAFRNSGNKPEWMVMETVPVIPPDLRPMVQLEGGRFATSDLNDLYRRVINRNNRLKKLLDMHAPGLIVQNEERMLQEAVDALIDNGRRGRPVVGPGNRPLKSISHMLKGKQGRFRQNLLGKRVDYSGRSVIDVSPELKFYQCGVPRPMALELFRPFVMRELVRRGIASNIKNAKRKIDREDDDIWDVLEYVIKERPVLLNRAPTLHRLSIQAFEPVLVPGKALRLHPLACEAYNADFDGDQMAIHVPLSDEAVAESRLLMLAAHHILTPKDGTPIVTPSQDIVLGNYWLTQAEIGREGEGMIFATPEEATIAYNNGDIHYHTIIGVSAASMPKKDWGAGHEDSVFVTTYGRLVFNSLFPDDYFYINEPTQDNLKQPMADKYFLEDGQDIQDKIAEIGQDLVATPFKKGFLGDTISEIYKRYRVQRTSEYLDDLKEMGYSASTISGLTIGMADIPETKTKDALVAEARKQVKQVSKMFRRGKLSDKERHDNIIKIWTDCKDAVQQEIAEFKDQKNPISVMQQSGARGNISNFTQLAGMRGLMATPSGELFEIPVISNFKEGLTVLELFMSTHGARKGMTDTALKTAQSGYLTRRLVDVAQDVIIREDDCGTDRGITAKAIVDKDAGLIESLYDRLVGRFTNRTIRDPQTGEVICSKGVLMDEQMAQKIVDAGVQEVQIRSILTCNTSHGICRKCYGRNLATAEEVEIGEAVGTVAAQSIGEPGTQLTLRTFHTGGVAGAEDITQGLPRVQELFEARNPKGRAVISEVDGVVDKIESNAAEHLQEITVKGKIDTRVYTIPYTAKPAVQEGDEIHRGDKLIPGSIDPKELIKVTDTLTTEEYILAEVQKSYRTQGVDLADKHAEVLTRQMLQKVRVLDPGETDILPGEVMDIAEFRDRNRDVIISGGIPATAQAYILGITKAALETNSFLSAASFQETTRVLTDASIRGKNDPLLGLKENVIIGKIIPAGTGMPIYRDQVPKADVQQPDSVYSIADLEKKMEDENKETESK.

Cys60, Cys62, Cys75, and Cys78 together coordinate Zn(2+). Asp449, Asp451, and Asp453 together coordinate Mg(2+). Zn(2+) is bound by residues Cys821, Cys896, Cys903, and Cys906.

It belongs to the RNA polymerase beta' chain family. In terms of assembly, the RNAP catalytic core consists of 2 alpha, 1 beta, 1 beta' and 1 omega subunit. When a sigma factor is associated with the core the holoenzyme is formed, which can initiate transcription. The cofactor is Mg(2+). Zn(2+) serves as cofactor.

The enzyme catalyses RNA(n) + a ribonucleoside 5'-triphosphate = RNA(n+1) + diphosphate. In terms of biological role, DNA-dependent RNA polymerase catalyzes the transcription of DNA into RNA using the four ribonucleoside triphosphates as substrates. The sequence is that of DNA-directed RNA polymerase subunit beta' from Lactobacillus delbrueckii subsp. bulgaricus (strain ATCC 11842 / DSM 20081 / BCRC 10696 / JCM 1002 / NBRC 13953 / NCIMB 11778 / NCTC 12712 / WDCM 00102 / Lb 14).